A 233-amino-acid polypeptide reads, in one-letter code: Large ribosomal subunit protein uL1 (233 aa).

Belongs to the universal ribosomal protein uL1 family. Part of the 50S ribosomal subunit.

Binds directly to 23S rRNA. The L1 stalk is quite mobile in the ribosome, and is involved in E site tRNA release. Functionally, protein L1 is also a translational repressor protein, it controls the translation of the L11 operon by binding to its mRNA. In Geobacillus thermodenitrificans (strain NG80-2), this protein is Large ribosomal subunit protein uL1.